The primary structure comprises 377 residues: Alanine dehydrogenase (377 aa).

Positions 15 and 74 each coordinate substrate. Residue histidine 95 is the Proton donor/acceptor of the active site. NAD(+) is bound by residues serine 133, aspartate 197, arginine 202, serine 219, 238–239, 266–269, and 304–307; these read VL, VAID, and VGNM. Residue aspartate 269 is the Proton donor/acceptor of the active site.

The protein belongs to the AlaDH/PNT family. Homohexamer.

The enzyme catalyses L-alanine + NAD(+) + H2O = pyruvate + NH4(+) + NADH + H(+). It participates in organosulfur degradation; alkanesulfonate degradation. Involved in an anaerobic respiration pathway that converts the sulfonate taurine (2-aminoethanesulfonate) to ammonia, acetate and sulfide. Acts as an alanine dehydrogenase that regenerates pyruvate, the amino group acceptor for the taurine--pyruvate aminotransferase enzyme, and liberates ammonia. This is Alanine dehydrogenase from Bilophila wadsworthia (strain 3_1_6).